Reading from the N-terminus, the 571-residue chain is MTRAGDHNRQRGCCGSLADYLTSAKFLLYLGHSLSTWGDRMWHFAVSVFLVELYGNSLLLTAVYGLVVAGSVLVLGAIIGDWVDKNARLKVAQTSLVVQNVSVILCGIILMMVFLHKHELLTMYHGWVLTSCYILIITIANIANLASTATAITIQRDWIVVVAGEDRSKLANMNATIRRIDQLTNILAPMAVGQIMTFGSPVIGCGFISGWNLVSMCVEYVLLWKVYQKTPALAVKAGLKEEETELKQLNLHKDTEPKPLEGTHLMGVKDSNIHELEHEQEPTCASQMAEPFRTFRDGWVSYYNQPVFLAGMGLAFLYMTVLGFDCITTGYAYTQGLSGSILSILMGASAITGIMGTVAFTWLRRKCGLVRTGLISGLAQLSCLILCVISVFMPGSPLDLSVSPFEDIRSRFIQGESITPTKIPEITTEIYMSNGSNSANIVPETSPESVPIISVSLLFAGVIAARIGLWSFDLTVTQLLQENVIESERGIINGVQNSMNYLLDLLHFIMVILAPNPEAFGLLVLISVSFVAMGHIMYFRFAQNTLGNKLFACGPDAKEVRKENQANTSVV.

Residues Met-1–Ser-23 are Cytoplasmic-facing. The helical transmembrane segment at Ala-24 to Leu-53 threads the bilayer. Residues Asp-39 and His-43 each coordinate Fe cation. Over Tyr-54–Ser-57 the chain is Extracellular. Residues Leu-58–Asp-84 form a helical membrane-spanning segment. Residues Lys-85–Ala-87 are Cytoplasmic-facing. Residues Arg-88–His-118 form a helical membrane-spanning segment. Topologically, residues Glu-119–Gly-126 are extracellular. Residues Trp-127–Val-162 traverse the membrane as a helical segment. Topologically, residues Ala-163–Gly-164 are cytoplasmic. A helical membrane pass occupies residues Glu-165–Ile-195. Topologically, residues Met-196–Val-202 are extracellular. A helical transmembrane segment spans residues Ile-203–Lys-229. The Cytoplasmic segment spans residues Thr-230–Pro-306. Residues Val-307–Tyr-333 form a helical membrane-spanning segment. Cys-326 is a Fe cation binding site. Over Thr-334–Ser-338 the chain is Extracellular. The chain crosses the membrane as a helical span at residues Gly-339–Lys-366. The Cytoplasmic portion of the chain corresponds to Cys-367–Gly-368. The helical transmembrane segment at Leu-369–Val-391 threads the bilayer. Residues Phe-392–Ile-453 are Extracellular-facing. N-linked (GlcNAc...) asparagine glycosylation is present at Asn-434. The helical transmembrane segment at Ser-454–Asn-483 threads the bilayer. Residues Val-484 to Glu-488 lie on the Cytoplasmic side of the membrane. A helical membrane pass occupies residues Arg-489–Leu-513. His-507 lines the Fe cation pocket. Residues Ala-514–Asn-516 are Extracellular-facing. The chain crosses the membrane as a helical span at residues Pro-517–Ala-542. Residues Gln-543–Val-571 lie on the Cytoplasmic side of the membrane.

This sequence belongs to the ferroportin (FP) (TC 2.A.100) family. SLC40A subfamily. As to quaternary structure, identified in a complex with STOM. Interacts with HAMP; affinity of the peptide hormone HAMP for SLC40A1 increases by 80-fold in the presence of iron and the interaction promotes SLC40A1 ubiquitination and degradation. Part of a complex composed of SLC40A1/ferroportin, TF/transferrin and HEPH/hephaestin that transfers iron from cells to transferrin. Polyubiquitinated by RNF217; leading to proteasomal degradation. Under conditions of high systemic iron levels, both the hormone peptide hepcidin/HAMP and holo(iron bound)-transferrin/TF induce the ubiquitination, internalization and proteasomal degradation of SLC40A1 to control iron release from cells. As to expression, detected in erythrocytes (at protein level). Expressed in placenta, intestine, muscle and spleen. Highly expressed in mature red blood.

The protein resides in the cell membrane. It localises to the basolateral cell membrane. The enzyme catalyses Fe(2+)(in) = Fe(2+)(out). In terms of biological role, transports Fe(2+) from the inside of a cell to the outside of the cell, playing a key role for maintaining systemic iron homeostasis. Transports iron from intestinal, splenic, hepatic cells, macrophages and erythrocytes into the blood to provide iron to other tissues. Controls therefore dietary iron uptake, iron recycling by macrophages and erythrocytes, and release of iron stores in hepatocytes. When iron is in excess in serum, circulating HAMP/hepcidin levels increase resulting in a degradation of SLC40A1, thus limiting the iron efflux to plasma. This Homo sapiens (Human) protein is Ferroportin.